The sequence spans 306 residues: Pre-mRNA-splicing factor cwf26 (306 aa).

The segment at 130–152 (KAEERRKREEKSSNLDEEELRKS) is disordered. Residues 130 to 198 (KAEERRKREE…KEQQQGVVQV (69 aa)) adopt a coiled-coil conformation.

It belongs to the CWC26 family. As to quaternary structure, belongs to the 40S cdc5-associated complex (or cwf complex), a spliceosome sub-complex reminiscent of a late-stage spliceosome composed of the U2, U5 and U6 snRNAs and at least brr2, cdc5, cwf2/prp3, cwf3/syf1, cwf4/syf3, cwf5/ecm2, spp42/cwf6, cwf7/spf27, cwf8, cwf9, cwf10, cwf11, cwf12, prp45/cwf13, cwf14, cwf15, cwf16, cwf17, cwf18, cwf19, cwf20, cwf21, cwf22, cwf23, cwf24, cwf25, cwf26, cyp7/cwf27, cwf28, cwf29/ist3, lea1, msl1, prp5/cwf1, prp10, prp12/sap130, prp17, prp22, sap61, sap62, sap114, sap145, slu7, smb1, smd1, smd3, smf1, smg1 and syf2.

The protein resides in the cytoplasm. Its subcellular location is the nucleus. Functionally, involved in mRNA splicing. The sequence is that of Pre-mRNA-splicing factor cwf26 (cwf26) from Schizosaccharomyces pombe (strain 972 / ATCC 24843) (Fission yeast).